The primary structure comprises 360 residues: Probable cinnamyl alcohol dehydrogenase 6 (360 aa).

Cys-48 lines the Zn(2+) pocket. Residue Thr-50 coordinates NADP(+). Positions 70, 71, 101, 104, 107, 115, and 164 each coordinate Zn(2+). NADP(+) contacts are provided by residues Thr-168, 192 to 197 (GLGGLG), 215 to 220 (STSPAK), Thr-255, Gly-279, and 302 to 304 (SMT).

This sequence belongs to the zinc-containing alcohol dehydrogenase family. Homodimer. Zn(2+) is required as a cofactor.

The catalysed reaction is (E)-cinnamyl alcohol + NADP(+) = (E)-cinnamaldehyde + NADPH + H(+). It catalyses the reaction (E)-coniferol + NADP(+) = (E)-coniferaldehyde + NADPH + H(+). It carries out the reaction (E)-sinapyl alcohol + NADP(+) = (E)-sinapaldehyde + NADPH + H(+). The enzyme catalyses (E)-4-coumaroyl alcohol + NADP(+) = (E)-4-coumaraldehyde + NADPH + H(+). The catalysed reaction is (E)-caffeyl alcohol + NADP(+) = (E)-caffeyl aldehyde + NADPH + H(+). The protein operates within aromatic compound metabolism; phenylpropanoid biosynthesis. Its function is as follows. Involved in lignin biosynthesis. Catalyzes the final step specific for the production of lignin monomers. Catalyzes the NADPH-dependent reduction of coniferaldehyde, 5-hydroxyconiferaldehyde, sinapaldehyde, 4-coumaraldehyde and caffeyl aldehyde to their respective alcohols. This chain is Probable cinnamyl alcohol dehydrogenase 6, found in Oryza sativa subsp. japonica (Rice).